The chain runs to 880 residues: Alanine--tRNA ligase (880 aa).

Residues histidine 566, histidine 570, cysteine 668, and histidine 672 each coordinate Zn(2+).

This sequence belongs to the class-II aminoacyl-tRNA synthetase family. Requires Zn(2+) as cofactor.

It is found in the cytoplasm. The catalysed reaction is tRNA(Ala) + L-alanine + ATP = L-alanyl-tRNA(Ala) + AMP + diphosphate. Functionally, catalyzes the attachment of alanine to tRNA(Ala) in a two-step reaction: alanine is first activated by ATP to form Ala-AMP and then transferred to the acceptor end of tRNA(Ala). Also edits incorrectly charged Ser-tRNA(Ala) and Gly-tRNA(Ala) via its editing domain. The polypeptide is Alanine--tRNA ligase (Parafrankia sp. (strain EAN1pec)).